A 96-amino-acid chain; its full sequence is Exopolysaccharide production repressor protein (96 aa).

The next 2 helical transmembrane spans lie at 6-26 and 35-55; these read FVVS…FLTG and TLLC…FLVW. A disordered region spans residues 64 to 96; the sequence is LSPGQLPADPTNDEKQTGKLSLRRLNRPPHFNS.

Its subcellular location is the cell membrane. It participates in glycan metabolism; exopolysaccharide biosynthesis. In terms of biological role, inhibition of exopolysaccharide synthesis (EPS) and nodulation ability (NOD). This chain is Exopolysaccharide production repressor protein (exoX), found in Sinorhizobium fredii (strain NBRC 101917 / NGR234).